The primary structure comprises 343 residues: GTPase Obg (343 aa).

Residues 1–157 (MKFIDEVSIS…IEVRLELKLI (157 aa)) enclose the Obg domain. Residues 13–44 (SGRGGPGCVSFRRESMQARGGPDGGNGGKGGD) form a disordered region. Residues 33–43 (GPDGGNGGKGG) are compositionally biased toward gly residues. Residues 158-338 (ADVGIVGFPN…FVQELARQIL (181 aa)) form the OBG-type G domain. GTP is bound by residues 164–171 (GFPNAGKS), 189–193 (FTTLT), 211–214 (DIPG), 290–293 (NKID), and 319–321 (SAV). Positions 171 and 191 each coordinate Mg(2+).

It belongs to the TRAFAC class OBG-HflX-like GTPase superfamily. OBG GTPase family. In terms of assembly, monomer. Requires Mg(2+) as cofactor.

Its subcellular location is the cytoplasm. Functionally, an essential GTPase which binds GTP, GDP and possibly (p)ppGpp with moderate affinity, with high nucleotide exchange rates and a fairly low GTP hydrolysis rate. Plays a role in control of the cell cycle, stress response, ribosome biogenesis and in those bacteria that undergo differentiation, in morphogenesis control. The chain is GTPase Obg from Bdellovibrio bacteriovorus (strain ATCC 15356 / DSM 50701 / NCIMB 9529 / HD100).